A 417-amino-acid polypeptide reads, in one-letter code: Serine hydroxymethyltransferase (417 aa).

(6S)-5,6,7,8-tetrahydrofolate is bound by residues Leu-121 and Gly-125 to Leu-127. An N6-(pyridoxal phosphate)lysine modification is found at Lys-229. Ser-355–Phe-357 serves as a coordination point for (6S)-5,6,7,8-tetrahydrofolate.

It belongs to the SHMT family. Homodimer. It depends on pyridoxal 5'-phosphate as a cofactor.

Its subcellular location is the cytoplasm. It carries out the reaction (6R)-5,10-methylene-5,6,7,8-tetrahydrofolate + glycine + H2O = (6S)-5,6,7,8-tetrahydrofolate + L-serine. Its pathway is one-carbon metabolism; tetrahydrofolate interconversion. It participates in amino-acid biosynthesis; glycine biosynthesis; glycine from L-serine: step 1/1. In terms of biological role, catalyzes the reversible interconversion of serine and glycine with tetrahydrofolate (THF) serving as the one-carbon carrier. This reaction serves as the major source of one-carbon groups required for the biosynthesis of purines, thymidylate, methionine, and other important biomolecules. Also exhibits THF-independent aldolase activity toward beta-hydroxyamino acids, producing glycine and aldehydes, via a retro-aldol mechanism. In Shewanella sp. (strain ANA-3), this protein is Serine hydroxymethyltransferase.